Reading from the N-terminus, the 305-residue chain is NAD kinase 2 (305 aa).

Asp78 functions as the Proton acceptor in the catalytic mechanism. NAD(+)-binding positions include 78-79, 152-153, Asp182, 193-198, and Asn251; these read DG, NE, and TAYSLS.

The protein belongs to the NAD kinase family. The cofactor is a divalent metal cation.

It localises to the cytoplasm. It catalyses the reaction NAD(+) + ATP = ADP + NADP(+) + H(+). In terms of biological role, involved in the regulation of the intracellular balance of NAD and NADP, and is a key enzyme in the biosynthesis of NADP. Catalyzes specifically the phosphorylation on 2'-hydroxyl of the adenosine moiety of NAD to yield NADP. Functions as a growth repressor under light-activated heterotrophic growth conditions and light and dark cycle conditions in the presence of glucose. NADP(H)/NAD(H) maintenance by slr0400 probably plays a significant role in modulating glycolysis and the TCA cycle to repress the growth rate and maintain the photosynthetic capacity. The protein is NAD kinase 2 of Synechocystis sp. (strain ATCC 27184 / PCC 6803 / Kazusa).